The sequence spans 651 residues: Epithelial sodium channel subunit beta (651 aa).

Residues 1–50 (MFLKRWFIRALHRLQKGPGYGYSELFVWYCNNTNTHGPKRLIIEGPKKKT) are Cytoplasmic-facing. A helical transmembrane segment spans residues 51 to 71 (LWSLFTVTFACLVFWQWGLLI). The Extracellular segment spans residues 72 to 541 (QTYLSWGVSV…GGQFGFWMGG (470 aa)). 8 cysteine pairs are disulfide-bonded: Cys98–Cys281, Cys205–Cys212, Cys258–Cys265, Cys370–Cys457, Cys395–Cys453, Cys399–Cys449, Cys408–Cys435, and Cys410–Cys424. The helical transmembrane segment at 542-562 (SVLCIIEFGEVFIDCIWIAVI) threads the bilayer. Residues 563 to 651 (RFVKWYKNRK…TEHHSDSEDL (89 aa)) are Cytoplasmic-facing. The disordered stretch occupies residues 612-651 (QPPDLYLPTTLEIPGTPPPKYDSLRVHPIDTEHHSDSEDL). Basic and acidic residues predominate over residues 633–651 (DSLRVHPIDTEHHSDSEDL).

The protein belongs to the amiloride-sensitive sodium channel (TC 1.A.6) family. SCNN1B subfamily. In terms of assembly, component of the heterotrimeric epithelial sodium channel (ENaC) composed of an alpha/SCNN1A, a beta/SCNN1B and a gamma/SCNN1G subunit. Strongly expressed in gill, kidney and rectum and more weakly in brain, eye, liver and muscle.

The protein resides in the apical cell membrane. It is found in the cytoplasmic vesicle membrane. It catalyses the reaction Na(+)(in) = Na(+)(out). Its activity is regulated as follows. Originally identified and characterized by its inhibition by the diuretic drug amiloride. In terms of biological role, this is one of the three pore-forming subunits of the heterotrimeric epithelial sodium channel (ENaC), a critical regulator of sodium balance and fluid homeostasis. ENaC operates in epithelial tissues, where it mediates the electrodiffusion of sodium ions from extracellular fluid through the apical membrane of cells, with water following osmotically. The sequence is that of Epithelial sodium channel subunit beta from Neoceratodus forsteri (Australian lungfish).